Reading from the N-terminus, the 402-residue chain is Multidrug resistance protein MdtH (402 aa).

The Cytoplasmic portion of the chain corresponds to 1-12 (MSRVSQARNLGK). The chain crosses the membrane as a helical span at residues 13-33 (YFLLIDNMLVVLGFFVVFPLI). The Periplasmic segment spans residues 34–98 (SIRFVDQMGW…GFATMGIAHE (65 aa)). A helical transmembrane segment spans residues 99 to 116 (PWLLWFSCFLSGLGGTLF). Residues 117–138 (DPPRSALVVKLIRPEQRGRFFS) are Cytoplasmic-facing. The helical transmembrane segment at 139 to 159 (LLMMQDSAGAVIGALLGSWLL) threads the bilayer. Topologically, residues 160 to 164 (QYDFR) are periplasmic. Residues 165 to 185 (LVCATGAILFILCALFNAWLL) traverse the membrane as a helical segment. At 186–213 (PAWKLSTARTPVREGMRRVMSNKRFVTY) the chain is on the cytoplasmic side. Residues 214–234 (VLTLAGYYMLAVQVMLMLPIM) traverse the membrane as a helical segment. The Periplasmic portion of the chain corresponds to 235–243 (VNDIAGSPA). A helical transmembrane segment spans residues 244–264 (AVKWMYAIEACLSLTLLYPIA). Over 265-276 (RWSEKRFRLEHR) the chain is Cytoplasmic. The helical transmembrane segment at 277-297 (LMAGLLVMSLSMLPIGMVGNL) threads the bilayer. Residues 298–299 (QQ) lie on the Periplasmic side of the membrane. A helical membrane pass occupies residues 300–320 (LFTLICAFYIGSVIAEPARET). The Cytoplasmic portion of the chain corresponds to 321–339 (LSASPADARARGSYMGFSR). Residues 340–360 (LGLAIGGAISYIGGGWLFDMG) traverse the membrane as a helical segment. Residues 361–367 (KALAQPE) are Periplasmic-facing. Residues 368 to 388 (LPWMMLGIIGFITFLALGWQF) form a helical membrane-spanning segment. Over 389–402 (SHKRTPRRMLEPGA) the chain is Cytoplasmic.

Belongs to the major facilitator superfamily. DHA1 family. MdtH (TC 2.A.1.2.21) subfamily.

Its subcellular location is the cell inner membrane. This chain is Multidrug resistance protein MdtH, found in Salmonella typhi.